Reading from the N-terminus, the 319-residue chain is HPr kinase/phosphorylase (319 aa).

Active-site residues include H141 and K162. 156-163 lines the ATP pocket; it reads GNSGVGKS. A Mg(2+)-binding site is contributed by S163. D180 functions as the Proton acceptor; for phosphorylation activity. Proton donor; for dephosphorylation activity in the catalytic mechanism. The tract at residues 204-213 is important for the catalytic mechanism of both phosphorylation and dephosphorylation; it reads MEIRGIGIID. E205 serves as a coordination point for Mg(2+). Residue R246 is part of the active site. An important for the catalytic mechanism of dephosphorylation region spans residues 267–272; the sequence is PVKVGR.

Belongs to the HPrK/P family. In terms of assembly, homohexamer. Requires Mg(2+) as cofactor.

The enzyme catalyses [HPr protein]-L-serine + ATP = [HPr protein]-O-phospho-L-serine + ADP + H(+). It catalyses the reaction [HPr protein]-O-phospho-L-serine + phosphate + H(+) = [HPr protein]-L-serine + diphosphate. Functionally, catalyzes the ATP- as well as the pyrophosphate-dependent phosphorylation of a specific serine residue in HPr, a phosphocarrier protein of the phosphoenolpyruvate-dependent sugar phosphotransferase system (PTS). HprK/P also catalyzes the pyrophosphate-producing, inorganic phosphate-dependent dephosphorylation (phosphorolysis) of seryl-phosphorylated HPr (P-Ser-HPr). The two antagonistic activities of HprK/P are regulated by several intracellular metabolites, which change their concentration in response to the absence or presence of rapidly metabolisable carbon sources (glucose, fructose, etc.) in the growth medium. Therefore, by controlling the phosphorylation state of HPr, HPrK/P is a sensor enzyme that plays a major role in the regulation of carbon metabolism and sugar transport: it mediates carbon catabolite repression (CCR), and regulates PTS-catalyzed carbohydrate uptake and inducer exclusion. The chain is HPr kinase/phosphorylase from Lactobacillus gasseri (strain ATCC 33323 / DSM 20243 / BCRC 14619 / CIP 102991 / JCM 1131 / KCTC 3163 / NCIMB 11718 / NCTC 13722 / AM63).